Consider the following 1041-residue polypeptide: FHIP family protein CG3558 (1041 aa).

Ser-490 is modified (phosphoserine). 5 disordered regions span residues 619-648 (RPADEESEATDTTVATTASEADMDHNSSSL), 792-818 (KGNEGSPMHHSQQQQMVTNSGQQQGQL), 858-879 (SMFSRKSASTSTAPPNGSSASS), 903-947 (DGRG…SNSS), and 959-986 (SNTTTHSASTLHGLDGGPSTGGFNSEPA). Residues 628–637 (TDTTVATTAS) show a composition bias toward polar residues. A Phosphoserine modification is found at Ser-797. The segment covering 800 to 818 (HHSQQQQMVTNSGQQQGQL) has biased composition (polar residues). The span at 903–925 (DGRGISQAQTSAGTCETSLSTQP) shows a compositional bias: polar residues. Positions 927–947 (AGASRTGANATSTAASGSNSS) are enriched in low complexity. The segment covering 959 to 968 (SNTTTHSAST) has biased composition (polar residues).

The protein belongs to the FHIP family.

The sequence is that of FHIP family protein CG3558 from Drosophila melanogaster (Fruit fly).